Here is a 437-residue protein sequence, read N- to C-terminus: tRNA modification GTPase MnmE (437 aa).

Residues arginine 21, glutamate 79, and arginine 119 each contribute to the (6S)-5-formyl-5,6,7,8-tetrahydrofolate site. Residues 223 to 364 (GFRVVLAGPP…FRSALIAHAR (142 aa)) enclose the TrmE-type G domain. Residues 233–238 (NAGKST), 252–258 (AAEPGTT), and 277–280 (DTAG) each bind GTP. Serine 237 and threonine 258 together coordinate Mg(2+). Lysine 437 is a (6S)-5-formyl-5,6,7,8-tetrahydrofolate binding site.

Belongs to the TRAFAC class TrmE-Era-EngA-EngB-Septin-like GTPase superfamily. TrmE GTPase family. As to quaternary structure, homodimer. Heterotetramer of two MnmE and two MnmG subunits. K(+) is required as a cofactor.

The protein resides in the cytoplasm. Its function is as follows. Exhibits a very high intrinsic GTPase hydrolysis rate. Involved in the addition of a carboxymethylaminomethyl (cmnm) group at the wobble position (U34) of certain tRNAs, forming tRNA-cmnm(5)s(2)U34. The protein is tRNA modification GTPase MnmE of Novosphingobium aromaticivorans (strain ATCC 700278 / DSM 12444 / CCUG 56034 / CIP 105152 / NBRC 16084 / F199).